The primary structure comprises 731 residues: 1,4-alpha-glucan branching enzyme GlgB (731 aa).

Aspartate 411 functions as the Nucleophile in the catalytic mechanism. Glutamate 464 functions as the Proton donor in the catalytic mechanism.

The protein belongs to the glycosyl hydrolase 13 family. GlgB subfamily. Monomer.

It catalyses the reaction Transfers a segment of a (1-&gt;4)-alpha-D-glucan chain to a primary hydroxy group in a similar glucan chain.. Its pathway is glycan biosynthesis; glycogen biosynthesis. Functionally, catalyzes the formation of the alpha-1,6-glucosidic linkages in glycogen by scission of a 1,4-alpha-linked oligosaccharide from growing alpha-1,4-glucan chains and the subsequent attachment of the oligosaccharide to the alpha-1,6 position. In Mycobacterium tuberculosis (strain ATCC 25177 / H37Ra), this protein is 1,4-alpha-glucan branching enzyme GlgB.